The following is a 176-amino-acid chain: Cytochrome b (176 aa).

3 consecutive transmembrane segments (helical) span residues 33 to 53, 77 to 98, and 113 to 133; these read FGSL…FLAM, WILR…YLHV, and WNIG…GYVL. 2 residues coordinate heme b: histidine 83 and histidine 97.

This sequence belongs to the cytochrome b family. In terms of assembly, the cytochrome bc1 complex contains 11 subunits: 3 respiratory subunits (MT-CYB, CYC1 and UQCRFS1), 2 core proteins (UQCRC1 and UQCRC2) and 6 low-molecular weight proteins (UQCRH/QCR6, UQCRB/QCR7, UQCRQ/QCR8, UQCR10/QCR9, UQCR11/QCR10 and a cleavage product of UQCRFS1). This cytochrome bc1 complex then forms a dimer. Heme b is required as a cofactor.

The protein localises to the mitochondrion inner membrane. In terms of biological role, component of the ubiquinol-cytochrome c reductase complex (complex III or cytochrome b-c1 complex) that is part of the mitochondrial respiratory chain. The b-c1 complex mediates electron transfer from ubiquinol to cytochrome c. Contributes to the generation of a proton gradient across the mitochondrial membrane that is then used for ATP synthesis. The sequence is that of Cytochrome b (MT-CYB) from Myotis leibii (Eastern small-footed myotis).